The following is a 116-amino-acid chain: UPF0342 protein LBA1592 (116 aa).

Belongs to the UPF0342 family.

This Lactobacillus acidophilus (strain ATCC 700396 / NCK56 / N2 / NCFM) protein is UPF0342 protein LBA1592.